The chain runs to 445 residues: Probable D-serine dehydratase (445 aa).

K111 bears the N6-(pyridoxal phosphate)lysine mark.

This sequence belongs to the serine/threonine dehydratase family. DsdA subfamily. Pyridoxal 5'-phosphate serves as cofactor.

It catalyses the reaction D-serine = pyruvate + NH4(+). This chain is Probable D-serine dehydratase, found in Burkholderia pseudomallei (strain 668).